Consider the following 96-residue polypeptide: Co-chaperonin GroES (96 aa).

This sequence belongs to the GroES chaperonin family. In terms of assembly, heptamer of 7 subunits arranged in a ring. Interacts with the chaperonin GroEL.

The protein localises to the cytoplasm. Its function is as follows. Together with the chaperonin GroEL, plays an essential role in assisting protein folding. The GroEL-GroES system forms a nano-cage that allows encapsulation of the non-native substrate proteins and provides a physical environment optimized to promote and accelerate protein folding. GroES binds to the apical surface of the GroEL ring, thereby capping the opening of the GroEL channel. The protein is Co-chaperonin GroES of Polynucleobacter necessarius subsp. necessarius (strain STIR1).